Here is a 160-residue protein sequence, read N- to C-terminus: S-protein homolog 13 (160 aa).

Positions 1 to 27 are cleaved as a signal peptide; that stretch reads MGRDLGWCFFVATVLLAAVLLPAPTIA.

The protein belongs to the plant self-incompatibility (S1) protein family.

The protein resides in the secreted. In Arabidopsis thaliana (Mouse-ear cress), this protein is S-protein homolog 13.